Consider the following 434-residue polypeptide: Ribonuclease T2-like (434 aa).

The first 18 residues, 1-18 (MLLKNLHSLLQLPIFSNG), serve as a signal peptide directing secretion. Intrachain disulfides connect Cys-27–Cys-46, Cys-35–Cys-94, Cys-45–Cys-171, Cys-102–Cys-163, and Cys-241–Cys-277. N-linked (GlcNAc...) asparagine glycans are attached at residues Asn-37 and Asn-70. The active site involves His-87. Asn-103 and Asn-123 each carry an N-linked (GlcNAc...) asparagine glycan. Residues Glu-156 and His-160 contribute to the active site.

The protein belongs to the RNase T2 family. Post-translationally, N-glycosylated.

Its subcellular location is the vacuole lumen. The protein localises to the cytoplasm. It carries out the reaction a ribonucleotidyl-ribonucleotide-RNA + H2O = a 3'-end 3'-phospho-ribonucleotide-RNA + a 5'-end dephospho-ribonucleoside-RNA + H(+). Functionally, rnase which modulates cell survival under stress conditions. Released from the vacuole to the cytoplasm during stress to promote tRNA and rRNA cleavage and to activate separately a downstream pathway that promotes cell death. Involved in cell size, vacuolar morphology and growth at high temperatures and high salt concentration. This Saccharomyces cerevisiae (strain ATCC 204508 / S288c) (Baker's yeast) protein is Ribonuclease T2-like (RNY1).